Here is a 644-residue protein sequence, read N- to C-terminus: MQTVRMTTAQALVKFLNQQYVEFDGKQQKFVKGIFTIFGHGNVVGLGQALEEDAGELEVYQGRNEQGMANAAMAFAKQKHRKQIMACTSSVGPGSANMITSAATASANNIPVLLLPGDVFATRQPDPVLQQIEQTHDLSISTNDAFRAVSKYWDRINRPEQLMTAMIQAMRVLTNPADTGAVTICLPQDVQGEAWDFPSYFFQKRVHRIERRLPTKASLADAVEMIKRKKKPVMICGGGVRYAEAAEELKQFAETFHIPFGETQAGKSAIESSHPYNLGGIGVTGNVAANTIAKEADLVIGIGTRFTDFTTASKQLFQNEEVEFLNINISEFHANKLDALKVIADAKEALLALIDELQEIDYQSSYTVEIADAKDAWETELSRLHNIRFTCQDFTPEVEGHFNENLNEYVDALGTQLTQTAVIGQINTLLDKDAIIVGAAGSLPGDLQRMWASRKPNTYHMEYGYSCMGYEVAGALGAKLAEPSKEVYAMVGDGSYQMLHSELVTSLQENKKINVLLFDNSGFGCINNLQMGNGMGSFGTEFRYRNQETRKLDGAIMKIDFAASAAGYGVKTYHVTSLEQLQEALIDAKKQTVSTLIDIKVLPKTMTNGYESWWHVGVAEVSKNQSVQAAYESKVSNLQQARSY.

Position 65 (Glu65) interacts with thiamine diphosphate. The thiamine pyrophosphate binding stretch occupies residues 442-522 (SLPGDLQRMW…INVLLFDNSG (81 aa)). Mg(2+) contacts are provided by Asp493 and Asn520.

It belongs to the TPP enzyme family. Mg(2+) is required as a cofactor. Requires thiamine diphosphate as cofactor.

It catalyses the reaction 3D-3,5/4-trihydroxycyclohexane-1,2-dione + H2O = 5-deoxy-D-glucuronate + H(+). It participates in polyol metabolism; myo-inositol degradation into acetyl-CoA; acetyl-CoA from myo-inositol: step 3/7. In terms of biological role, involved in the cleavage of the C1-C2 bond of 3D-(3,5/4)-trihydroxycyclohexane-1,2-dione (THcHDO) to yield 5-deoxy-glucuronate (5DG). This Bacillus anthracis (strain A0248) protein is 3D-(3,5/4)-trihydroxycyclohexane-1,2-dione hydrolase.